The chain runs to 351 residues: Peptide chain release factor 1 (351 aa).

Residue Q229 is modified to N5-methylglutamine.

This sequence belongs to the prokaryotic/mitochondrial release factor family. Methylated by PrmC. Methylation increases the termination efficiency of RF1.

Its subcellular location is the cytoplasm. Functionally, peptide chain release factor 1 directs the termination of translation in response to the peptide chain termination codons UAG and UAA. This chain is Peptide chain release factor 1, found in Cereibacter sphaeroides (strain ATCC 17029 / ATH 2.4.9) (Rhodobacter sphaeroides).